Consider the following 285-residue polypeptide: Putative ankyrin repeat protein R551 (285 aa).

4 ANK repeats span residues Asp-99 to Ile-129, Asn-157 to Glu-186, Ile-188 to Arg-214, and Ser-215 to Gln-249.

This is Putative ankyrin repeat protein R551 from Acanthamoeba polyphaga (Amoeba).